A 686-amino-acid polypeptide reads, in one-letter code: MGPRSRERRAGAVQNTNDSSALSKRSLAARGYVQDPFAALLVPGAARRAPLIHRGYYVRARAVRHCVRAFLEQIGAPQAALRAQILSLGAGFDSLYFRLKTAGRLARAAVWEVDFPDVARRKAERIGETPELCALTGPFERGEPASALCFESADYCILGLDLRQLQRVEEALGAAGLDAASPTLLLAEAVLTYLEPESAAALIAWAAQRFPNALFVVYEQMRPQDAFGQFMLQHFRQLNSPLHGLERFPDVEAQRRRFLQAGWTACGAVDMNEFYHCFLPAEERRRVENIEPFDEFEEWHLKCAHYFILAASRGDTLSHTLVFPSSEAFPRVNPASPSGVFPASVVSSEGQVPNLKRYGHASVFLSPDVILSAGGFGEQEGRHCRVSQFHLLSRDCDSEWKGSQIGSCGTGVQWDGRLYHTMTRLSESRVLVLGGRLSPVSPALGVLQLHFFKSEDNNTEDLKVTITKAGRKDDSTLCCWRHSTTEVSCQNQEYLFVYGGRSVVEPVLSDWHFLHVGTMAWVRIPVEGEVPEARHSHSACTWQGGALIAGGLGASEEPLNSVLFLRPISCGFLWESVDIQPPITPRYSHTAHVLNGKLLLVGGIWIHSSSFPGVTVINLTTGLSSEYQIDTTYVPWPLMLHNHTSILLPEEQQLLLLGGGGNCFSFGTYFNPHTVTLDLSSLSAGQ.

Basic and acidic residues predominate over residues 1–10; it reads MGPRSRERRA. The interval 1 to 21 is disordered; the sequence is MGPRSRERRAGAVQNTNDSSA. S-adenosyl-L-methionine contacts are provided by residues arginine 59, glycine 89, aspartate 114, 161–162, and glutamate 188; that span reads DL.

Belongs to the methyltransferase superfamily. LCMT family. As to quaternary structure, interacts with RNF144B/IBRDC2.

It carries out the reaction 7-[(3S)-3-amino-3-carboxypropyl]wyosine(37) in tRNA(Phe) + S-adenosyl-L-methionine = 7-[(3S)-(3-amino-3-methoxycarbonyl)propyl]wyosine(37) in tRNA(Phe) + S-adenosyl-L-homocysteine. The enzyme catalyses 7-[(3S)-(3-amino-3-methoxycarbonyl)propyl]wyosine(37) in tRNA(Phe) + S-adenosyl-L-methionine + CO2 = wybutosine(37) in tRNA(Phe) + S-adenosyl-L-homocysteine + 2 H(+). The protein operates within tRNA modification; wybutosine-tRNA(Phe) biosynthesis. Its function is as follows. Probable S-adenosyl-L-methionine-dependent methyltransferase that acts as a component of the wybutosine biosynthesis pathway. Wybutosine is a hyper modified guanosine with a tricyclic base found at the 3'-position adjacent to the anticodon of eukaryotic phenylalanine tRNA. May methylate the carboxyl group of leucine residues to form alpha-leucine ester residues. This is tRNA wybutosine-synthesizing protein 4 (LCMT2) from Homo sapiens (Human).